We begin with the raw amino-acid sequence, 185 residues long: Ribosome-recycling factor (185 aa).

This sequence belongs to the RRF family.

The protein localises to the cytoplasm. Responsible for the release of ribosomes from messenger RNA at the termination of protein biosynthesis. May increase the efficiency of translation by recycling ribosomes from one round of translation to another. This is Ribosome-recycling factor from Acidothermus cellulolyticus (strain ATCC 43068 / DSM 8971 / 11B).